Reading from the N-terminus, the 260-residue chain is Triosephosphate isomerase (260 aa).

11 to 13 contributes to the substrate binding site; the sequence is NWK. The active-site Electrophile is the H103. Catalysis depends on E175, which acts as the Proton acceptor. Substrate is bound by residues G181, S220, and 241–242; that span reads GG.

It belongs to the triosephosphate isomerase family. Homodimer.

The protein resides in the cytoplasm. It carries out the reaction D-glyceraldehyde 3-phosphate = dihydroxyacetone phosphate. The protein operates within carbohydrate biosynthesis; gluconeogenesis. It functions in the pathway carbohydrate degradation; glycolysis; D-glyceraldehyde 3-phosphate from glycerone phosphate: step 1/1. In terms of biological role, involved in the gluconeogenesis. Catalyzes stereospecifically the conversion of dihydroxyacetone phosphate (DHAP) to D-glyceraldehyde-3-phosphate (G3P). This chain is Triosephosphate isomerase, found in Shewanella sp. (strain MR-7).